We begin with the raw amino-acid sequence, 246 residues long: Dehydration-responsive element-binding protein 1H (246 aa).

Residues methionine 1–arginine 43 are disordered. Positions serine 10–serine 24 are enriched in low complexity. Residues glutamine 28 to threonine 37 are compositionally biased toward basic residues. A DNA-binding region (AP2/ERF) is located at residues valine 46–glutamine 110. The interval alanine 155–threonine 187 is disordered. Residues asparagine 172–proline 181 are compositionally biased toward polar residues.

It belongs to the AP2/ERF transcription factor family. ERF subfamily.

The protein resides in the nucleus. Transcriptional activator that binds specifically to the DNA sequence 5'-[AG]CCGAC-3'. Binding to the C-repeat/DRE element mediates high salinity- and dehydration-inducible transcription. The sequence is that of Dehydration-responsive element-binding protein 1H (DREB1H) from Oryza sativa subsp. indica (Rice).